The sequence spans 247 residues: DNA polymerase sliding clamp 1 (247 aa).

It belongs to the PCNA family. Homotrimer. The subunits circularize to form a toroid; DNA passes through its center. Replication factor C (RFC) is required to load the toroid on the DNA.

Sliding clamp subunit that acts as a moving platform for DNA processing. Responsible for tethering the catalytic subunit of DNA polymerase and other proteins to DNA during high-speed replication. This chain is DNA polymerase sliding clamp 1, found in Sulfolobus acidocaldarius (strain ATCC 33909 / DSM 639 / JCM 8929 / NBRC 15157 / NCIMB 11770).